Here is a 142-residue protein sequence, read N- to C-terminus: Hemoglobin subunit alpha (142 aa).

One can recognise a Globin domain in the interval 2–142 (VLSGEDKSNI…VSTVLTSKYR (141 aa)). Phosphoserine is present on S4. An N6-succinyllysine mark is found at K8 and K12. K17 is subject to N6-acetyllysine; alternate. The residue at position 17 (K17) is an N6-succinyllysine; alternate. Y25 bears the Phosphotyrosine mark. Residue S36 is modified to Phosphoserine. N6-succinyllysine is present on K41. S50 is modified (phosphoserine). Residue H59 coordinates O2. Residue H88 participates in heme b binding. Phosphoserine is present on S103. T109 bears the Phosphothreonine mark. Phosphoserine occurs at positions 112, 125, and 132. T135 and T138 each carry phosphothreonine. S139 carries the phosphoserine modification.

Belongs to the globin family. As to quaternary structure, heterotetramer of two alpha chains and two beta chains. Red blood cells.

Functionally, involved in oxygen transport from the lung to the various peripheral tissues. Hemopressin acts as an antagonist peptide of the cannabinoid receptor CNR1. Hemopressin-binding efficiently blocks cannabinoid receptor CNR1 and subsequent signaling. This is Hemoglobin subunit alpha (Hba) from Mus musculus (Mouse).